A 103-amino-acid polypeptide reads, in one-letter code: Large ribosomal subunit protein bL21 (103 aa).

Belongs to the bacterial ribosomal protein bL21 family. As to quaternary structure, part of the 50S ribosomal subunit. Contacts protein L20.

In terms of biological role, this protein binds to 23S rRNA in the presence of protein L20. The polypeptide is Large ribosomal subunit protein bL21 (Serratia proteamaculans (strain 568)).